A 340-amino-acid chain; its full sequence is Lipoate--protein ligase 2 (340 aa).

One can recognise a BPL/LPL catalytic domain in the interval 31 to 222; that stretch reads FLDEDILFPY…QILGIDDIKE (192 aa). ATP is bound by residues arginine 73, 78–81, lysine 136, and alanine 140; that span reads GAVY. (R)-lipoate is bound at residue lysine 136. Residues 293 to 321 adopt a coiled-coil conformation; sequence QGDIKDVEEALQGTKMTREDLMHQLKQLD.

The protein belongs to the LplA family.

The enzyme catalyses L-lysyl-[lipoyl-carrier protein] + (R)-lipoate + ATP = N(6)-[(R)-lipoyl]-L-lysyl-[lipoyl-carrier protein] + AMP + diphosphate + H(+). It functions in the pathway protein modification; protein lipoylation via exogenous pathway; protein N(6)-(lipoyl)lysine from lipoate: step 1/2. It participates in protein modification; protein lipoylation via exogenous pathway; protein N(6)-(lipoyl)lysine from lipoate: step 2/2. In terms of biological role, catalyzes specifically the lipoylation of GcvH-L (SAV0324), likely via the ATP-dependent activation of lipoate to lipoyl-AMP and the transfer of the activated lipoyl onto the lipoyl domain of the target protein. Can also utilize lipoamide as substrate for GcvH-L modification. The protein is Lipoate--protein ligase 2 of Staphylococcus aureus (strain Mu50 / ATCC 700699).